Reading from the N-terminus, the 210-residue chain is uncharacterized protein (210 aa).

The Fe2OG dioxygenase domain occupies 90 to 193; that stretch reads KPDQIIVNEY…RISITFRNVI (104 aa).

This is an uncharacterized protein from Acanthamoeba polyphaga (Amoeba).